Consider the following 360-residue polypeptide: DNA replication and repair protein RecF (360 aa).

30–37 is a binding site for ATP; sequence GQNGSGKT.

The protein belongs to the RecF family.

It localises to the cytoplasm. The RecF protein is involved in DNA metabolism; it is required for DNA replication and normal SOS inducibility. RecF binds preferentially to single-stranded, linear DNA. It also seems to bind ATP. The polypeptide is DNA replication and repair protein RecF (Shewanella baltica (strain OS185)).